The primary structure comprises 246 residues: MFGNAFGVKKRRSDEAEKPFWISYADLMTAMMVLFLVVMVASLSSVTQRIQRAEQGEKTRGQDISRLCERLELHARNVNKTIVVDCHDNRISFGEAGRFDHNQFFLNAEGQKALQDVVPLVLEASNSEEGKKWFKQIVIEGFTDTDGSYLYNLHLSLQRSEWVMCSLLDSRSPLQKNISAEQQLQIRKLFLAGGVSFNNAKESKEASRRVELRMQFFGLKDKRDKADEVDFPPVVNKEVCQLVMPL.

A helical membrane pass occupies residues phenylalanine 20–valine 40. The region spanning cysteine 86 to glycine 218 is the OmpA-like domain.

It belongs to the MotB family.

The protein localises to the cell inner membrane. Component of antiviral defense system Zorya type I, composed of ZorA, ZorB, ZorC and ZorD. Expression of Zorya type I in E.coli (strain MG1655) confers 10,000-fold resistance to phage SECphi27, 100-fold resistance to lambda, and 10-fold resistance to T7. While most T7 infected Zorya-containing cells undergo abortive infection, a minority produce viable phage progeny. These eventually accumulate to a high multiplicity of infection, leading to culture collapse by 2 hours after initial infection. ZorA and ZorB probably assemble in the cell inner membrane and exert their effect there. This Escherichia coli O139:H28 (strain E24377A / ETEC) protein is Zorya protein ZorB.